The chain runs to 122 residues: Large ribosomal subunit protein uL14c (122 aa).

It belongs to the universal ribosomal protein uL14 family. Part of the 50S ribosomal subunit.

The protein localises to the plastid. It localises to the chloroplast. Functionally, binds to 23S rRNA. The chain is Large ribosomal subunit protein uL14c from Cucumis sativus (Cucumber).